A 223-amino-acid polypeptide reads, in one-letter code: 2-C-methyl-D-erythritol 4-phosphate cytidylyltransferase (223 aa).

Belongs to the IspD/TarI cytidylyltransferase family. IspD subfamily.

The enzyme catalyses 2-C-methyl-D-erythritol 4-phosphate + CTP + H(+) = 4-CDP-2-C-methyl-D-erythritol + diphosphate. It participates in isoprenoid biosynthesis; isopentenyl diphosphate biosynthesis via DXP pathway; isopentenyl diphosphate from 1-deoxy-D-xylulose 5-phosphate: step 2/6. Functionally, catalyzes the formation of 4-diphosphocytidyl-2-C-methyl-D-erythritol from CTP and 2-C-methyl-D-erythritol 4-phosphate (MEP). In Prochlorococcus marinus (strain MIT 9215), this protein is 2-C-methyl-D-erythritol 4-phosphate cytidylyltransferase.